The chain runs to 70 residues: DNA-directed RNA polymerase subunit omega (70 aa).

The protein belongs to the RNA polymerase subunit omega family. As to quaternary structure, the RNAP catalytic core consists of 2 alpha, 1 beta, 1 beta' and 1 omega subunit. When a sigma factor is associated with the core the holoenzyme is formed, which can initiate transcription.

It carries out the reaction RNA(n) + a ribonucleoside 5'-triphosphate = RNA(n+1) + diphosphate. Its function is as follows. Promotes RNA polymerase assembly. Latches the N- and C-terminal regions of the beta' subunit thereby facilitating its interaction with the beta and alpha subunits. The protein is DNA-directed RNA polymerase subunit omega of Clostridium perfringens (strain ATCC 13124 / DSM 756 / JCM 1290 / NCIMB 6125 / NCTC 8237 / Type A).